The primary structure comprises 78 residues: Small outer capsid protein (78 aa).

The protein belongs to the Tevenvirinae Soc family. In terms of assembly, homotrimer. Interacts with the major capsid protein; three soc molecules associate with each interface between the major capsid protein facets.

The protein localises to the virion. Capsid decoration protein which helps to stabilize the capsid against extremes of pH and temperature. Once maturation and expansion of the capsid has occured, trimers of soc attach the interfaces between the hexamer of the major capsid protein. Acts as a 'glue' between neighboring hexameric capsomers. Dispensable for the head morphogenesis and phage infection. The sequence is that of Small outer capsid protein from Escherichia phage RB69 (Bacteriophage RB69).